The primary structure comprises 406 residues: Tryptophan synthase beta chain (406 aa).

Lysine 99 carries the N6-(pyridoxal phosphate)lysine modification.

Belongs to the TrpB family. Tetramer of two alpha and two beta chains. The cofactor is pyridoxal 5'-phosphate.

The enzyme catalyses (1S,2R)-1-C-(indol-3-yl)glycerol 3-phosphate + L-serine = D-glyceraldehyde 3-phosphate + L-tryptophan + H2O. It participates in amino-acid biosynthesis; L-tryptophan biosynthesis; L-tryptophan from chorismate: step 5/5. In terms of biological role, the beta subunit is responsible for the synthesis of L-tryptophan from indole and L-serine. The polypeptide is Tryptophan synthase beta chain (Rhizobium etli (strain CIAT 652)).